A 252-amino-acid chain; its full sequence is MKVLNLGSKKQASFYVACELYKEMAFNQHCKLGLATGGTMTDLYEQLVKLLNKNQLNVDNVSTFNLDEYVGLTASHPQSYHYYMDDMLFKQYPYFNRKNIHIPNGDADDMNAEASKYNDVLEQQGQRDIQILGIGENGHIGFNEPGTPFDSVTHIVDLTESTIKANSRYFKNEDDVPKQAISMGLANILQAKRIILLAFGEKKRAAITHLLNQEISVDVPATLLHKHPNVEIYLDDEACPKNVAKIHVDEMD.

Aspartate 67 serves as the catalytic Proton acceptor; for enolization step. Catalysis depends on asparagine 137, which acts as the For ring-opening step. Histidine 139 (proton acceptor; for ring-opening step) is an active-site residue. Glutamate 144 (for ring-opening step) is an active-site residue.

This sequence belongs to the glucosamine/galactosamine-6-phosphate isomerase family. NagB subfamily.

The catalysed reaction is alpha-D-glucosamine 6-phosphate + H2O = beta-D-fructose 6-phosphate + NH4(+). It participates in amino-sugar metabolism; N-acetylneuraminate degradation; D-fructose 6-phosphate from N-acetylneuraminate: step 5/5. Its function is as follows. Catalyzes the reversible isomerization-deamination of glucosamine 6-phosphate (GlcN6P) to form fructose 6-phosphate (Fru6P) and ammonium ion. The sequence is that of Glucosamine-6-phosphate deaminase from Staphylococcus aureus (strain Mu3 / ATCC 700698).